The chain runs to 91 residues: Small ribosomal subunit protein uS19 (91 aa).

Belongs to the universal ribosomal protein uS19 family.

Its function is as follows. Protein S19 forms a complex with S13 that binds strongly to the 16S ribosomal RNA. This Pseudomonas putida (strain ATCC 700007 / DSM 6899 / JCM 31910 / BCRC 17059 / LMG 24140 / F1) protein is Small ribosomal subunit protein uS19.